The primary structure comprises 230 residues: Orotidine 5'-phosphate decarboxylase (230 aa).

Substrate-binding positions include Asp-10, Lys-31, 58 to 67, Thr-117, Arg-179, Gln-188, Gly-208, and Arg-209; that span reads DLKLHDIPNT. Residue Lys-60 is the Proton donor of the active site. The disordered stretch occupies residues 177-196; the sequence is GIRPKDASSDDQKRITTPED. The segment covering 179-196 has biased composition (basic and acidic residues); that stretch reads RPKDASSDDQKRITTPED.

It belongs to the OMP decarboxylase family. Type 1 subfamily. As to quaternary structure, homodimer.

It carries out the reaction orotidine 5'-phosphate + H(+) = UMP + CO2. Its pathway is pyrimidine metabolism; UMP biosynthesis via de novo pathway; UMP from orotate: step 2/2. Its function is as follows. Catalyzes the decarboxylation of orotidine 5'-monophosphate (OMP) to uridine 5'-monophosphate (UMP). This chain is Orotidine 5'-phosphate decarboxylase, found in Staphylococcus saprophyticus subsp. saprophyticus (strain ATCC 15305 / DSM 20229 / NCIMB 8711 / NCTC 7292 / S-41).